The primary structure comprises 176 residues: NAD(P)H-quinone oxidoreductase subunit 6, chloroplastic (176 aa).

The next 5 helical transmembrane spans lie at 10–30 (FLLVFLGLGLILGGLGVVLLA), 33–53 (IYSAFSLGLVFVCISLFYILA), 61–81 (AQLLIYVGAINVLIIFAVMFI), 92–112 (LWTVGDGVTSVVCTSLFVSLI), and 152–172 (FFLPFEFISIILLVALIGAIA).

The protein belongs to the complex I subunit 6 family. In terms of assembly, NDH is composed of at least 16 different subunits, 5 of which are encoded in the nucleus.

The protein localises to the plastid. The protein resides in the chloroplast thylakoid membrane. The catalysed reaction is a plastoquinone + NADH + (n+1) H(+)(in) = a plastoquinol + NAD(+) + n H(+)(out). The enzyme catalyses a plastoquinone + NADPH + (n+1) H(+)(in) = a plastoquinol + NADP(+) + n H(+)(out). Functionally, NDH shuttles electrons from NAD(P)H:plastoquinone, via FMN and iron-sulfur (Fe-S) centers, to quinones in the photosynthetic chain and possibly in a chloroplast respiratory chain. The immediate electron acceptor for the enzyme in this species is believed to be plastoquinone. Couples the redox reaction to proton translocation, and thus conserves the redox energy in a proton gradient. In Guizotia abyssinica (Niger), this protein is NAD(P)H-quinone oxidoreductase subunit 6, chloroplastic (ndhG).